A 232-amino-acid chain; its full sequence is Orotidine 5'-phosphate decarboxylase (232 aa).

Residues D11, K33, 60-69 (DLKFHDIPTT), T120, R181, Q191, G211, and R212 contribute to the substrate site. The active-site Proton donor is the K62.

Belongs to the OMP decarboxylase family. Type 1 subfamily. Homodimer.

It catalyses the reaction orotidine 5'-phosphate + H(+) = UMP + CO2. Its pathway is pyrimidine metabolism; UMP biosynthesis via de novo pathway; UMP from orotate: step 2/2. In terms of biological role, catalyzes the decarboxylation of orotidine 5'-monophosphate (OMP) to uridine 5'-monophosphate (UMP). The sequence is that of Orotidine 5'-phosphate decarboxylase from Tolumonas auensis (strain DSM 9187 / NBRC 110442 / TA 4).